The chain runs to 270 residues: Tetraspanin-14 (270 aa).

At 1 to 17 (MHYYRYSNAKVSCWYKY) the chain is on the cytoplasmic side. A helical transmembrane segment spans residues 18–38 (LLFSYNIIFWLAGVVFLGVGL). Over 39 to 61 (WAWSEKGVLSDLTKVTRMHGIDP) the chain is Extracellular. A helical transmembrane segment spans residues 62-82 (VVLVLMVGVVMFTLGFAGCVG). Residues 83-92 (ALRENICLLN) are Cytoplasmic-facing. Residues 93 to 113 (FFCGTIVLIFFLELAVAVLAF) traverse the membrane as a helical segment. Residues 114–232 (LFQDWVRDRF…QALESWLPRN (119 aa)) lie on the Extracellular side of the membrane. Positions 114-232 (LFQDWVRDRF…QALESWLPRN (119 aa)) are necessary and sufficient for interaction with ADAM10. Disulfide bonds link Cys-153/Cys-221, Cys-154/Cys-186, Cys-170/Cys-180, and Cys-187/Cys-200. N-linked (GlcNAc...) asparagine glycosylation is present at Asn-169. The helical transmembrane segment at 233-253 (IYIVAGVFIAISLLQIFGIFL) threads the bilayer. Residues 254–270 (ARTLISDIEAVKAGHHF) are Cytoplasmic-facing.

The protein belongs to the tetraspanin (TM4SF) family. As to quaternary structure, interacts with ADAM10; the interaction promotes ADAM10 maturation and cell surface expression.

The protein localises to the cell membrane. Part of TspanC8 subgroup, composed of 6 members that interact with the transmembrane metalloprotease ADAM10. This interaction is required for ADAM10 exit from the endoplasmic reticulum and for enzymatic maturation and trafficking to the cell surface as well as substrate specificity. Different TspanC8/ADAM10 complexes have distinct substrates. Negatively regulates ADAM10-mediated cleavage of GP6. Promotes ADAM10-mediated cleavage of CDH5. The polypeptide is Tetraspanin-14 (Homo sapiens (Human)).